Reading from the N-terminus, the 264-residue chain is Thiamine pyrophosphokinase 1 (264 aa).

Positions Met-1–Phe-12 are enriched in polar residues. The interval Met-1–Asp-27 is disordered.

It belongs to the thiamine pyrophosphokinase family.

The protein localises to the cytoplasm. It is found in the cytosol. It catalyses the reaction thiamine + ATP = thiamine diphosphate + AMP + H(+). Its pathway is cofactor biosynthesis; thiamine diphosphate biosynthesis; thiamine diphosphate from thiamine: step 1/1. In terms of biological role, catalyzes the phosphorylation of thiamine to thiamine pyrophosphate (TPP). TPP is an active cofactor for enzymes involved in glycolysis and energy production. Plant leaves require high levels of TPP for photosynthesis and carbohydrate metabolism. This is Thiamine pyrophosphokinase 1 (TPK1) from Oryza sativa subsp. japonica (Rice).